A 579-amino-acid chain; its full sequence is XK-related protein 7 (579 aa).

The segment covering 1-18 has biased composition (low complexity); sequence MAAKSDGAAASAGPDPEG. The tract at residues 1–40 is disordered; sequence MAAKSDGAAASAGPDPEGAAGGARGSAGGRGEAAAAAGPP. Residues 19–31 are compositionally biased toward gly residues; that stretch reads AAGGARGSAGGRG. 2 helical membrane-spanning segments follow: residues 59-79 and 89-109; these read WVLC…WLAA and YFSL…LLSF. The disordered stretch occupies residues 146-165; that stretch reads GAFRTKEGSPEPGPQPAPSS. A run of 5 helical transmembrane segments spans residues 260-280, 314-334, 355-375, 384-404, and 415-435; these read LLPA…LASY, GLAF…CIVG, GEEI…WFNV, MTLY…FWYS, and LIMV…MCVY. Residues 466 to 510 are disordered; the sequence is ADAITSPPRSLPRTTGAERDGASAGERAGTPTPPVFQVRPGLPPT.

This sequence belongs to the XK family.

The protein resides in the cell membrane. The sequence is that of XK-related protein 7 (XKR7) from Pan troglodytes (Chimpanzee).